A 141-amino-acid polypeptide reads, in one-letter code: Nucleoside diphosphate kinase (141 aa).

Lys11, Phe59, Arg87, Thr93, Arg104, and Asn114 together coordinate ATP. His117 (pros-phosphohistidine intermediate) is an active-site residue.

Belongs to the NDK family. Homotetramer. Mg(2+) serves as cofactor.

The protein resides in the cytoplasm. It catalyses the reaction a 2'-deoxyribonucleoside 5'-diphosphate + ATP = a 2'-deoxyribonucleoside 5'-triphosphate + ADP. It carries out the reaction a ribonucleoside 5'-diphosphate + ATP = a ribonucleoside 5'-triphosphate + ADP. Its function is as follows. Major role in the synthesis of nucleoside triphosphates other than ATP. The ATP gamma phosphate is transferred to the NDP beta phosphate via a ping-pong mechanism, using a phosphorylated active-site intermediate. The polypeptide is Nucleoside diphosphate kinase (Pseudomonas putida (strain W619)).